A 607-amino-acid chain; its full sequence is DNA mismatch repair protein MutL (607 aa).

It belongs to the DNA mismatch repair MutL/HexB family.

This protein is involved in the repair of mismatches in DNA. It is required for dam-dependent methyl-directed DNA mismatch repair. May act as a 'molecular matchmaker', a protein that promotes the formation of a stable complex between two or more DNA-binding proteins in an ATP-dependent manner without itself being part of a final effector complex. This is DNA mismatch repair protein MutL from Anaeromyxobacter dehalogenans (strain 2CP-1 / ATCC BAA-258).